Consider the following 185-residue polypeptide: Ribosome-recycling factor (185 aa).

This sequence belongs to the RRF family.

It is found in the cytoplasm. Responsible for the release of ribosomes from messenger RNA at the termination of protein biosynthesis. May increase the efficiency of translation by recycling ribosomes from one round of translation to another. The chain is Ribosome-recycling factor from Nitrosomonas eutropha (strain DSM 101675 / C91 / Nm57).